Consider the following 95-residue polypeptide: Aspartyl/glutamyl-tRNA(Asn/Gln) amidotransferase subunit C (95 aa).

Belongs to the GatC family. Heterotrimer of A, B and C subunits.

It carries out the reaction L-glutamyl-tRNA(Gln) + L-glutamine + ATP + H2O = L-glutaminyl-tRNA(Gln) + L-glutamate + ADP + phosphate + H(+). The enzyme catalyses L-aspartyl-tRNA(Asn) + L-glutamine + ATP + H2O = L-asparaginyl-tRNA(Asn) + L-glutamate + ADP + phosphate + 2 H(+). Its function is as follows. Allows the formation of correctly charged Asn-tRNA(Asn) or Gln-tRNA(Gln) through the transamidation of misacylated Asp-tRNA(Asn) or Glu-tRNA(Gln) in organisms which lack either or both of asparaginyl-tRNA or glutaminyl-tRNA synthetases. The reaction takes place in the presence of glutamine and ATP through an activated phospho-Asp-tRNA(Asn) or phospho-Glu-tRNA(Gln). This Rhodopseudomonas palustris (strain TIE-1) protein is Aspartyl/glutamyl-tRNA(Asn/Gln) amidotransferase subunit C.